The sequence spans 320 residues: Ferrochelatase (320 aa).

Fe cation-binding residues include H194 and E275.

This sequence belongs to the ferrochelatase family. Monomer.

It is found in the cytoplasm. It carries out the reaction heme b + 2 H(+) = protoporphyrin IX + Fe(2+). It functions in the pathway porphyrin-containing compound metabolism; protoheme biosynthesis; protoheme from protoporphyrin-IX: step 1/1. Its function is as follows. Catalyzes the ferrous insertion into protoporphyrin IX. The chain is Ferrochelatase from Salmonella schwarzengrund (strain CVM19633).